The following is a 582-amino-acid chain: Pescadillo homolog (582 aa).

Residues 277–329 are a coiled coil; that stretch reads LSALSASLARVVATVEEEENQLDNFPTEEEDQENMQAREKEQKEQEAQKRLFE. Over residues 294-309 the composition is skewed to acidic residues; the sequence is EENQLDNFPTEEEDQE. The interval 294-317 is disordered; the sequence is EENQLDNFPTEEEDQENMQAREKE. Residues 323-416 form the BRCT domain; the sequence is AQKRLFEGLK…MRLPVEDYFL (94 aa). The span at 445–454 shows a compositional bias: basic and acidic residues; the sequence is ALQRGEKPVQ. Disordered regions lie at residues 445–511 and 554–582; these read ALQR…ETGS and REVN…AKKQ. Residues 455–477 show a composition bias toward acidic residues; sequence EEDEEEEDEDEEEDDDVDDEEFT. A compositionally biased stretch (basic and acidic residues) spans 478–490; that stretch reads EEKNLKKMEDTRA. The stretch at 517 to 582 forms a coiled coil; sequence RLEQEEKAEE…QKKQKKAKKQ (66 aa). Residues 572-582 show a composition bias toward basic residues; sequence AQKKQKKAKKQ.

This sequence belongs to the pescadillo family. Component of the PeBoW complex, composed of bop1, pes1 and wdr12. The complex is held together by bop1, which interacts with pes1 via its N-terminal domain and with wdr12 via a high-affinity interaction between the seven-bladed beta-propeller domains of the 2 proteins. The PeBoW complex associates with the 66S pre-ribosome.

The protein resides in the nucleus. It is found in the nucleolus. It localises to the nucleoplasm. Its function is as follows. Component of the PeBoW complex, which is required for maturation of 28S and 5.8S ribosomal RNAs and formation of the 60S ribosome. This is Pescadillo homolog (pes1) from Salmo salar (Atlantic salmon).